A 202-amino-acid polypeptide reads, in one-letter code: Protein GrpE (202 aa).

The span at 21 to 37 shows a compositional bias: basic and acidic residues; it reads EELKNEEVKEETHEHEH. The disordered stretch occupies residues 21-52; the sequence is EELKNEEVKEETHEHEHKHGGHTCCGKHGHKH. Basic residues predominate over residues 38–51; that stretch reads KHGGHTCCGKHGHK.

This sequence belongs to the GrpE family. As to quaternary structure, homodimer.

It is found in the cytoplasm. Its function is as follows. Participates actively in the response to hyperosmotic and heat shock by preventing the aggregation of stress-denatured proteins, in association with DnaK and GrpE. It is the nucleotide exchange factor for DnaK and may function as a thermosensor. Unfolded proteins bind initially to DnaJ; upon interaction with the DnaJ-bound protein, DnaK hydrolyzes its bound ATP, resulting in the formation of a stable complex. GrpE releases ADP from DnaK; ATP binding to DnaK triggers the release of the substrate protein, thus completing the reaction cycle. Several rounds of ATP-dependent interactions between DnaJ, DnaK and GrpE are required for fully efficient folding. In Fusobacterium nucleatum subsp. polymorphum (Fusobacterium polymorphum), this protein is Protein GrpE.